Here is a 102-residue protein sequence, read N- to C-terminus: MFLKTGDKVRVITGKDKGQEGTIKKTFAKENRVIVEGVNKIKKHQKPSNMNPNGGIIDTEAPINASNVMLLDPSTNEPTRVGFEVVDGKKVRVAKKSGKQID.

The protein belongs to the universal ribosomal protein uL24 family. As to quaternary structure, part of the 50S ribosomal subunit.

One of two assembly initiator proteins, it binds directly to the 5'-end of the 23S rRNA, where it nucleates assembly of the 50S subunit. Functionally, one of the proteins that surrounds the polypeptide exit tunnel on the outside of the subunit. This is Large ribosomal subunit protein uL24 from Limosilactobacillus fermentum (strain NBRC 3956 / LMG 18251) (Lactobacillus fermentum).